We begin with the raw amino-acid sequence, 221 residues long: ATP-dependent Clp protease proteolytic subunit 1, mitochondrial (221 aa).

The N-terminal 25 residues, Met1 to Gly25, are a transit peptide targeting the mitochondrion. Ser120 functions as the Nucleophile in the catalytic mechanism. The active site involves His145.

Belongs to the peptidase S14 family. As to quaternary structure, tetradecamer that assembles into a two heptameric rings with a central cavity. As to expression, expressed in the intestine.

Its subcellular location is the mitochondrion matrix. The enzyme catalyses Hydrolysis of proteins to small peptides in the presence of ATP and magnesium. alpha-casein is the usual test substrate. In the absence of ATP, only oligopeptides shorter than five residues are hydrolyzed (such as succinyl-Leu-Tyr-|-NHMec, and Leu-Tyr-Leu-|-Tyr-Trp, in which cleavage of the -Tyr-|-Leu- and -Tyr-|-Trp bonds also occurs).. Its function is as follows. Clp cleaves peptides in various proteins in a process that requires ATP hydrolysis. Clp may be responsible for a fairly general and central housekeeping function rather than for the degradation of specific substrates. The protein is ATP-dependent Clp protease proteolytic subunit 1, mitochondrial (clpp-1) of Caenorhabditis elegans.